A 218-amino-acid polypeptide reads, in one-letter code: Cytidylate kinase (218 aa).

11–19 (GPGASGKGT) serves as a coordination point for ATP.

It belongs to the cytidylate kinase family. Type 1 subfamily.

It localises to the cytoplasm. It carries out the reaction CMP + ATP = CDP + ADP. It catalyses the reaction dCMP + ATP = dCDP + ADP. This is Cytidylate kinase from Neisseria meningitidis serogroup B (strain ATCC BAA-335 / MC58).